The sequence spans 908 residues: Collagen alpha-2(I) chain (908 aa).

Positions 1 to 36 are enriched in low complexity; it reads GPMGIMGPRGPPGASGAPGPAGEPGEPGQTGPAGAR. Disordered stretches follow at residues 1-211 and 227-908; these read GPMG…GITG and IPGP…PGPS. A compositionally biased stretch (basic and acidic residues) spans 45–59; sequence AGEDGHPGKPGRPGE. Low complexity-rich tracts occupy residues 129–158, 183–197, 234–249, 293–309, 403–418, 465–474, 526–542, and 569–589; these read VGAPGPAGARGSDGSVGPVGPAGPIGSAGP, AGPRGEVGIPGVSGP, PGPVGAAGATGARGIV, STGPTGPPGIRGSRGIP, AGIAGARGPAGPPGFQ, PAGPIGSRGP, RRGAPGAIGAPGPAGAN, and VGPAGPNGFAGPAGAAGQPGA. Residues 590 to 599 are compositionally biased toward basic and acidic residues; that stretch reads KGERGTKGPK. Residues 602 to 617 are compositionally biased toward low complexity; sequence NGPVGPTGPVGAAGPA. Gly residues predominate over residues 627 to 636; that stretch reads GSRGDGGPPG. Composition is skewed to low complexity over residues 637–647, 701–730, 745–775, and 785–805; these read ATGFPGAAGRT, AGEPGTAGIPGTPGPQGIIGAPGIIGIPGS, EPGPIGIAGPPGARGPPGAVGNPGVNGAPGE, and PGPAGSVGPAGAVGPRGPSGP. Residues 809 to 820 show a composition bias toward basic and acidic residues; that stretch reads RGDKGEPGDKGP. Pro residues predominate over residues 893-908; the sequence is AGPPGPPGPPGPPGPS.

It belongs to the fibrillar collagen family. In terms of assembly, trimers of one alpha 2(I) and two alpha 1(I) chains. Interacts (via C-terminus) with TMEM131 (via PapD-L domain); the interaction is direct and is involved in assembly and TRAPPIII ER-to-Golgi transport complex-dependent secretion of collagen. Post-translationally, prolines at the third position of the tripeptide repeating unit (G-X-Y) are hydroxylated in some or all of the chains. Forms the fibrils of tendon, ligaments and bones. In bones, the fibrils are mineralized with calcium hydroxyapatite.

Its subcellular location is the secreted. The protein localises to the extracellular space. It localises to the extracellular matrix. Its function is as follows. Type I collagen is a member of group I collagen (fibrillar forming collagen). In Toxodon sp, this protein is Collagen alpha-2(I) chain.